We begin with the raw amino-acid sequence, 310 residues long: MKGLVIKNTGSWYLVKTEDGRTIECKIKGNFRLKGIRSTNPIAVGDYVQIIINNEGTAFISEIEDRKNYIIRRASNLSKQSHILAANLDQCMLIVTINYPETSTIFIDRFLATAEAYRVPVKLIFNKTDRYNEDDTRYMDALINLYTYIGYPCFKVSALNNIGTDEVKKDLEGKVTLLSGNSGVGKSTLINAILPEQTLKTGEISDYHNKGMHTTTFSEMFPVDGGGYIIDTPGIKGFGTFDMEEEEVGHYFKEIFEYSAHCKYGNCTHRHEPGCAVRDAVEKHLISESRYTSYLNMLEDKEEGKYRAAY.

A CP-type G domain is found at 77–238 (LSKQSHILAA…IIDTPGIKGF (162 aa)). GTP contacts are provided by residues 126–129 (NKTD) and 180–188 (GNSGVGKST). Residues C262, C267, H269, and C275 each contribute to the Zn(2+) site.

It belongs to the TRAFAC class YlqF/YawG GTPase family. RsgA subfamily. Monomer. Associates with 30S ribosomal subunit, binds 16S rRNA. Requires Zn(2+) as cofactor.

It localises to the cytoplasm. In terms of biological role, one of several proteins that assist in the late maturation steps of the functional core of the 30S ribosomal subunit. Helps release RbfA from mature subunits. May play a role in the assembly of ribosomal proteins into the subunit. Circularly permuted GTPase that catalyzes slow GTP hydrolysis, GTPase activity is stimulated by the 30S ribosomal subunit. This chain is Small ribosomal subunit biogenesis GTPase RsgA, found in Phocaeicola vulgatus (strain ATCC 8482 / DSM 1447 / JCM 5826 / CCUG 4940 / NBRC 14291 / NCTC 11154) (Bacteroides vulgatus).